Consider the following 374-residue polypeptide: Translocating chain-associated membrane protein 1 (374 aa).

Topologically, residues 1 to 29 (MAIRKKSNKNPPLLSHEFLLQNHADIVSC) are cytoplasmic. A helical transmembrane segment spans residues 30–50 (LAMLFLLGLMFEVTAKGAIIF). Residues 51–76 (VALQYNVTRPATEEQATESASLYHYG) are Lumenal-facing. Asn56 carries N-linked (GlcNAc...) asparagine glycosylation. A helical transmembrane segment spans residues 77-97 (IKDLATVLFYMLVAIIIHAII). Residues 98–121 (QEYVLDKINRRMHFSKTKHSKFNE) lie on the Cytoplasmic side of the membrane. The region spanning 117–326 (SKFNESGQLS…NFQLRRWREH (210 aa)) is the TLC domain. Residues 122–142 (SGQLSAFYLFACVWGTFILIS) form a helical membrane-spanning segment. At 143 to 159 (ENYISDPTILWRAYPHN) the chain is on the lumenal side. The chain crosses the membrane as a helical span at residues 160–180 (LMTFQTKFFYISQLAYWLHAF). At 181–192 (PELYFQKTKKED) the chain is on the cytoplasmic side. Residues 193–213 (IPRQLVYIGLYLFHIAGAYLL) traverse the membrane as a helical segment. At 214-217 (NLNH) the chain is on the lumenal side. A helical transmembrane segment spans residues 218 to 238 (LGLVLLVLHYFVEFLFHISRL). The Cytoplasmic segment spans residues 239-251 (FYFSDEKYQKGFS). A helical membrane pass occupies residues 252–272 (LWAVLFVLGRLLTLILSVLTV). Topologically, residues 273 to 297 (GFGLARAENQKLDFSTGNFNVLAVR) are lumenal. A helical membrane pass occupies residues 298-318 (IAVLASICITQAFMMWKFINF). Residues 319-374 (QLRRWREHSAFQAPPVKRKPAVTKGRSSRKGTENGVNGTVTSNGADSPRNRKEKSS) lie on the Cytoplasmic side of the membrane. The interval 333–374 (PVKRKPAVTKGRSSRKGTENGVNGTVTSNGADSPRNRKEKSS) is disordered. Basic residues predominate over residues 334–347 (VKRKPAVTKGRSSR). Over residues 352–363 (NGVNGTVTSNGA) the composition is skewed to polar residues. Ser365 is modified (phosphoserine).

This sequence belongs to the TRAM family. As to quaternary structure, interacts with SEC61B. May interact with Derlin-1/DERL1. In terms of processing, N-glycosylated.

It localises to the endoplasmic reticulum membrane. In terms of biological role, involved in the translocation of nascent protein chains into or through the endoplasmic reticulum (ER) membrane by facilitating the proper chain positioning at the SEC61 channel. Regulates the exposure of nascent secretory protein chain to the cytosol during translocation into the ER. May affect the phospholipid bilayer in the vicinity of the lateral gate of the SEC61 channel, thereby facilitating ER protein transport. Intimately associates with transmembrane (TM) domain of nascent membrane proteins during the entire integration process into the ER membrane. Associates with the second TM domain of G-protein-coupled receptor opsin/OPSD nascent chain in the ER membrane, which may facilitate its integration into the membrane. Under conditions of ER stress, participates in the disposal of misfolded ER membrane proteins during the unfolded protein response (UPR), an integrated stress response (ISR) pathway, by selectively retrotranslocating misfolded ER-membrane proteins from the ER into the cytosol where they are ubiquitinated and degraded by the proteasome. This Mus musculus (Mouse) protein is Translocating chain-associated membrane protein 1.